The sequence spans 368 residues: Protein tesmin/TSO1-like CXC 8 (368 aa).

Positions 64-185 (KHKGCRCKQS…KCINCKNVSE (122 aa)) constitute a CRC domain.

This sequence belongs to the lin-54 family.

Its subcellular location is the nucleus. In terms of biological role, plays a role in development of both male and female reproductive tissues. The sequence is that of Protein tesmin/TSO1-like CXC 8 (TCX8) from Arabidopsis thaliana (Mouse-ear cress).